Here is a 103-residue protein sequence, read N- to C-terminus: Ig kappa-b4 chain C region (103 aa).

The Ig-like domain maps to 5–95 (PTVLIFPPAA…KVTQGTTSVV (91 aa)). An intrachain disulfide couples C26 to C85.

The chain is Ig kappa-b4 chain C region from Oryctolagus cuniculus (Rabbit).